Reading from the N-terminus, the 93-residue chain is Acyl carrier protein AcpXL (93 aa).

Residues Ser2 to Val88 form the Carrier domain. Ser37 carries the post-translational modification O-(pantetheine 4'-phosphoryl)serine.

Post-translationally, 4'-phosphopantetheine is transferred from CoA to a specific serine of apo-ACP by AcpS. This modification is essential for activity because fatty acids are bound in thioester linkage to the sulfhydryl of the prosthetic group.

The protein resides in the cytoplasm. The protein operates within glycolipid biosynthesis; KDO(2)-lipid A biosynthesis. Carrier of the growing fatty acid chain in fatty acid biosynthesis. Is involved in the transfer of long hydroxylated fatty acids to lipid A. In Brucella melitensis biotype 1 (strain ATCC 23456 / CCUG 17765 / NCTC 10094 / 16M), this protein is Acyl carrier protein AcpXL (acpXL).